The sequence spans 206 residues: Cytochrome c oxidase subunit 3 (206 aa).

Transmembrane regions (helical) follow at residues 26 to 46 (FLGF…FFGT), 68 to 88 (LVFI…LAMF), 97 to 117 (AMMI…GFEI), 143 to 163 (LVGL…VLLI), and 185 to 205 (WHFI…MGVG).

This sequence belongs to the cytochrome c oxidase subunit 3 family.

It localises to the cell membrane. It catalyses the reaction 4 Fe(II)-[cytochrome c] + O2 + 8 H(+)(in) = 4 Fe(III)-[cytochrome c] + 2 H2O + 4 H(+)(out). This is Cytochrome c oxidase subunit 3 (ctaE) from Alkalihalophilus pseudofirmus (strain ATCC BAA-2126 / JCM 17055 / OF4) (Bacillus pseudofirmus).